A 462-amino-acid polypeptide reads, in one-letter code: Elongation factor 1-alpha, somatic form (462 aa).

Residue Gly2 is modified to N,N,N-trimethylglycine. Residues 5 to 242 (KTHINIVVIG…DCILPPSRPT (238 aa)) form the tr-type G domain. The G1 stretch occupies residues 14–21 (GHVDSGKS). 14-21 (GHVDSGKS) is a GTP binding site. The tract at residues 70 to 74 (GITID) is G2. The interval 91 to 94 (DAPG) is G3. GTP contacts are provided by residues 91-95 (DAPGH) and 153-156 (NKMD). The interval 153-156 (NKMD) is G4. The interval 194–196 (SGW) is G5. A 5-glutamyl glycerylphosphorylethanolamine mark is found at Glu301 and Glu374.

The protein belongs to the TRAFAC class translation factor GTPase superfamily. Classic translation factor GTPase family. EF-Tu/EF-1A subfamily.

Its subcellular location is the cytoplasm. This protein promotes the GTP-dependent binding of aminoacyl-tRNA to the A-site of ribosomes during protein biosynthesis. The polypeptide is Elongation factor 1-alpha, somatic form (eef1as) (Xenopus laevis (African clawed frog)).